A 562-amino-acid polypeptide reads, in one-letter code: MESCLSFSSPPPTKKNIQEPVRPNAKFHKSVWGNHFLKYASNPEQIDYDADEQHEQLKEELRKKLVVNVTNERVEEQLKLIDAIQRLGVAYHFQREIDAVLNNLLLFRSNKDSDDIYMVSLRFRLLRQQGHNVSCSVFEKFKNIDGRFKDSLRDDVRGLLSLYEATHMRVHKEDILEEALEFTIYELEQVVKLSSNDTLLASEVIHALNMPIRKGLTRIEARHFISVYQHDKSHDETLLKFSKIDFNMLQKLHQRELADLTIWWEKLNVAEKMPYARDRFVECYFWGLGVYFEPQYSRARKMFVKVINLTSLIDDTYDSYGTFDELDLFTDAVKRWNVNETDKLPEYMRPLFMELLNVYNAMEEELKEEGVSYRVEYAKQSMIQIVTAYNDEAIWYHNGYVPTFDEYLKVALISCGYMLLSTISFVGMGVTTVTKPAFDWVTNNPLILIASCTINRLADDKVGHELEQERGHVASGVECYMKHNNATKQEVVIEFNKRISNAWKDINQECLHPLPVPLHLVVRPLYLACFMNVFYKDEDWYTHSNTQMKECINSLLVESVPY.

3 residues coordinate Mg(2+): Asp-314, Asp-318, and Glu-467. Residues 314–318 carry the DDXXD motif motif; that stretch reads DDTYD.

This sequence belongs to the terpene synthase family. The cofactor is Mg(2+). As to expression, predominantly expressed in root.

The catalysed reaction is (2E,6E)-farnesyl diphosphate = valerena-4,7(11)-diene + diphosphate. Its function is as follows. Catalyzes formation of valerena-4,7(11)-diene, one of the active ingredients responsible for the sedative effect extracted from Valeriana officinalis root. This is Valerena-4,7(11)-diene synthase (TPS2) from Valeriana officinalis (Valerian).